The sequence spans 426 residues: Glutamyl-tRNA reductase (426 aa).

Residues 49–52 (TCNR), serine 110, 115–117 (EAQ), and glutamine 121 each bind substrate. The Nucleophile role is filled by cysteine 50. 191-196 (GAGEMA) contributes to the NADP(+) binding site.

This sequence belongs to the glutamyl-tRNA reductase family. Homodimer.

It catalyses the reaction (S)-4-amino-5-oxopentanoate + tRNA(Glu) + NADP(+) = L-glutamyl-tRNA(Glu) + NADPH + H(+). The protein operates within porphyrin-containing compound metabolism; protoporphyrin-IX biosynthesis; 5-aminolevulinate from L-glutamyl-tRNA(Glu): step 1/2. Functionally, catalyzes the NADPH-dependent reduction of glutamyl-tRNA(Glu) to glutamate 1-semialdehyde (GSA). In Rhodopirellula baltica (strain DSM 10527 / NCIMB 13988 / SH1), this protein is Glutamyl-tRNA reductase.